The primary structure comprises 621 residues: Cystathionine gamma-synthase (621 aa).

An N6-(pyridoxal phosphate)lysine modification is found at Lys429.

The protein belongs to the trans-sulfuration enzymes family. MET7 subfamily. Both met-3 and met-7 are required to form a functional cystathionine gamma-synthase. Pyridoxal 5'-phosphate serves as cofactor.

The enzyme catalyses O-succinyl-L-homoserine + L-cysteine = L,L-cystathionine + succinate + H(+). It functions in the pathway amino-acid biosynthesis; L-methionine biosynthesis via de novo pathway; L-cystathionine from O-succinyl-L-homoserine: step 1/1. In terms of biological role, catalyzes the formation of L-cystathionine from O-succinyl-L-homoserine (OSHS) and L-cysteine, via a gamma-replacement reaction. In the absence of thiol, catalyzes gamma-elimination to form 2-oxobutanoate, succinate and ammonia. The chain is Cystathionine gamma-synthase (met-7) from Neurospora crassa (strain ATCC 24698 / 74-OR23-1A / CBS 708.71 / DSM 1257 / FGSC 987).